The sequence spans 274 residues: tRNA pseudouridine synthase A (274 aa).

Asp56 functions as the Nucleophile in the catalytic mechanism. Residue Tyr109 participates in substrate binding.

This sequence belongs to the tRNA pseudouridine synthase TruA family.

The enzyme catalyses uridine(38/39/40) in tRNA = pseudouridine(38/39/40) in tRNA. Formation of pseudouridine at positions 38, 39 and 40 in the anticodon stem and loop of transfer RNAs. The protein is tRNA pseudouridine synthase A of Methanosphaera stadtmanae (strain ATCC 43021 / DSM 3091 / JCM 11832 / MCB-3).